We begin with the raw amino-acid sequence, 831 residues long: Replication restart protein PriA (831 aa).

Residues 304 to 471 form the Helicase ATP-binding domain; sequence VLPLQGYHQV…HRHQNDPQRH (168 aa). 317-324 is an ATP binding site; the sequence is GVTGSGKT. The short motif at 413 to 416 is the DEAH box element; it reads DEEH. Residues C537, C540, C546, C549, C568, C571, C581, and C584 each contribute to the Zn(2+) site. Residues 575-735 enclose the Helicase C-terminal domain; sequence EIQPKVCPEC…ELPQREMLNY (161 aa).

Belongs to the helicase family. PriA subfamily. Component of the replication restart primosome. The cofactor is Zn(2+).

It carries out the reaction Couples ATP hydrolysis with the unwinding of duplex DNA by translocating in the 3'-5' direction.. It catalyses the reaction ATP + H2O = ADP + phosphate + H(+). Functionally, initiates the restart of stalled replication forks, which reloads the replicative helicase on sites other than the origin of replication. Recognizes and binds to abandoned replication forks and remodels them to uncover a helicase loading site. Promotes assembly of the primosome at these replication forks. The protein is Replication restart protein PriA of Synechocystis sp. (strain ATCC 27184 / PCC 6803 / Kazusa).